A 303-amino-acid chain; its full sequence is Probable porphobilinogen deaminase (303 aa).

Cysteine 233 bears the S-(dipyrrolylmethanemethyl)cysteine mark.

The protein belongs to the HMBS family. Requires dipyrromethane as cofactor.

It catalyses the reaction 4 porphobilinogen + H2O = hydroxymethylbilane + 4 NH4(+). Its pathway is porphyrin-containing compound metabolism; protoporphyrin-IX biosynthesis; coproporphyrinogen-III from 5-aminolevulinate: step 2/4. Functionally, tetrapolymerization of the monopyrrole PBG into the hydroxymethylbilane pre-uroporphyrinogen in several discrete steps. The protein is Probable porphobilinogen deaminase of Methanocella arvoryzae (strain DSM 22066 / NBRC 105507 / MRE50).